Here is a 179-residue protein sequence, read N- to C-terminus: Large ribosomal subunit protein uL5 (179 aa).

It belongs to the universal ribosomal protein uL5 family. In terms of assembly, part of the 50S ribosomal subunit; part of the 5S rRNA/L5/L18/L25 subcomplex. Contacts the 5S rRNA and the P site tRNA. Forms a bridge to the 30S subunit in the 70S ribosome.

Functionally, this is one of the proteins that bind and probably mediate the attachment of the 5S RNA into the large ribosomal subunit, where it forms part of the central protuberance. In the 70S ribosome it contacts protein S13 of the 30S subunit (bridge B1b), connecting the 2 subunits; this bridge is implicated in subunit movement. Contacts the P site tRNA; the 5S rRNA and some of its associated proteins might help stabilize positioning of ribosome-bound tRNAs. The polypeptide is Large ribosomal subunit protein uL5 (Nitrosomonas europaea (strain ATCC 19718 / CIP 103999 / KCTC 2705 / NBRC 14298)).